The primary structure comprises 126 residues: Large ribosomal subunit protein bL12 (126 aa).

It belongs to the bacterial ribosomal protein bL12 family. In terms of assembly, homodimer. Part of the ribosomal stalk of the 50S ribosomal subunit. Forms a multimeric L10(L12)X complex, where L10 forms an elongated spine to which 2 to 4 L12 dimers bind in a sequential fashion. Binds GTP-bound translation factors.

Its function is as follows. Forms part of the ribosomal stalk which helps the ribosome interact with GTP-bound translation factors. Is thus essential for accurate translation. The protein is Large ribosomal subunit protein bL12 of Koribacter versatilis (strain Ellin345).